We begin with the raw amino-acid sequence, 596 residues long: MENNAKDNQIMDSWEEGSGDKSSDISSALDIIEFILSTDSQENTADSNEVNTGNKRLSTTIYQLESKTTETSKENSGSVNENRQLGASHERATETKNRNVNQETIQGGNRGRSSSDSRAEIMVTRGISRSSPDPNNGTQIQESIDYNEVGEMDKDSAKREMRQSKDVPVKVSRSDAIPPTKQDGNGDDGRSMESISTFDSGYTSIVTAATLDDEEELLMKNTRPKRYQSTPQEDDKGIKKGVGKPEDTNKQSPILDYELNSKGSKRNQKTLKISTTTGESTRPQSGSQGKRITSWNILNSESGSRTESTSQNSQIPTSGKSNTVGPGRTTLESRIKTQKTDGKEREDTEESTRFTERAITLLQNLGVIQSAAKLDLYQDKRVVCVANVLNNADTASKIDFLAGLMIGVSMDHDTKLNQIQNEILSLKTDLKKMDESHRRLIENQKEQLSLITSLISNLKIMTERGGKKDQPENSGRTPMIKTKAKEEKIKKVRFDPLMETQGIEKNIPDLYRSIEKTPENDIQIKSDINRSNDESNATRLVPKRTSNTMRSLIIIINNSNLSSRAKQSYINELKLCKSDEEVSELMDMFNEDVSSQ.

3 stretches are compositionally biased toward polar residues: residues 1 to 11, 38 to 66, and 74 to 85; these read MENNAKDNQIM, TDSQ…QLES, and ENSGSVNENRQL. Disordered regions lie at residues 1–25, 38–196, and 220–352; these read MENN…SSDI, TDSQ…ESIS, and KNTR…EEST. Positions 33 to 41 are N0 binding; that stretch reads EFILSTDSQ. Residues 88–97 show a composition bias toward basic and acidic residues; that stretch reads SHERATETKN. The span at 127 to 144 shows a compositional bias: polar residues; it reads ISRSSPDPNNGTQIQESI. 2 stretches are compositionally biased toward basic and acidic residues: residues 151–168 and 233–249; these read EMDK…KDVP and EDDK…EDTN. The segment covering 270-324 has biased composition (polar residues); sequence TLKISTTTGESTRPQSGSQGKRITSWNILNSESGSRTESTSQNSQIPTSGKSNTV. Over residues 331-352 the composition is skewed to basic and acidic residues; the sequence is LESRIKTQKTDGKEREDTEEST. The interval 374 to 441 is multimerization; the sequence is LDLYQDKRVV…KMDESHRRLI (68 aa). Residues 416–436 adopt a coiled-coil conformation; sequence LNQIQNEILSLKTDLKKMDES. The tract at residues 442–475 is l protein binding; that stretch reads ENQKEQLSLITSLISNLKIMTERGGKKDQPENSG.

This sequence belongs to the respirovirus P protein family. As to quaternary structure, homotetramer. Interacts (via multimerization domain) with polymerase L; this interaction forms the polymerase complex. Interacts (via N-terminus) with N0; this interaction allows P to chaperon N0 before encapsidation and form the N-P complex. Interacts (via C-terminus) with N-RNA template; this interaction positions the polymerase on the template.

Essential cofactor of the RNA polymerase L that plays a central role in the transcription and replication by forming the polymerase complex with RNA polymerase L and recruiting L to the genomic N-RNA template for RNA synthesis. Also plays a central role in the encapsidation of nascent RNA chains by forming the encapsidation complex with the nucleocapsid protein N (N-P complex). Acts as a chaperone for newly synthesized free N protein, so-called N0, allowing encapsidation of nascent RNA chains during replication. The nucleoprotein protein N prevents excessive phosphorylation of P, which leads to down-regulation of viral transcription/ replication. Participates, together with N, in the formation of viral factories (viroplasms), which are large inclusions in the host cytoplasm where replication takes place. Recruits host PI4KB and remodel the host endoplasmic reticulum membrane to form viral replication factories. In Bovine parainfluenza 3 virus (BPIV-3), this protein is Phosphoprotein (P/V/D).